The sequence spans 498 residues: MSVCTLLISCAILAAPTLGSLQERRLYEDLMRNYNNLERPVANHSEPVTVHLKVALQQIIDVDEKNQVVYVNAWLDYTWNDYNLVWDKAEYGNITDVRFPAGKIWKPDVLLYNSVDTNFDSTYQTNMIVYSTGLVHWVPPGIFKISCKIDIQWFPFDEQKCFFKFGSWTYDGYKLDLQPATGGFDISEYISNGEWALPLTTVERNEKFYDCCPEPYPDVHFYLHMRRRTLYYGFNLIMPCILTTLMTLLGFTLPPDAGEKITLQITVLLSICFFLSIVSEMSPPTSEAVPLLGIFFTCCMIVVTASTVFTVYVLNLHYRTPETHDMGPWTRNLLLYWIPWILRMKRPGHNLTYASLPSLFSTKPNRHSESLIRNIKDNEHSLSRANSFDADCRLNQYIMTQSVSNGLTSLGSIPSTMISSNGTTTDVSQQATLLILHRIYHELKIVTKRMIEGDKEEQACNNWKFAAMVVDRLCLYVFTIFIIVSTIGIFWSAPYLVA.

An N-terminal signal peptide occupies residues Met-1–Gly-19. At Ser-20–Leu-230 the chain is on the extracellular side. N-linked (GlcNAc...) asparagine glycosylation is found at Asn-43 and Asn-93. Intrachain disulfides connect Cys-147/Cys-161 and Cys-211/Cys-212. 3 consecutive transmembrane segments (helical) span residues Tyr-231–Thr-252, Ile-261–Ser-279, and Phe-295–Leu-314. At Asn-315–Arg-472 the chain is on the cytoplasmic side. A helical membrane pass occupies residues Leu-473–Ala-493.

It belongs to the ligand-gated ion channel (TC 1.A.9) family. Acetylcholine receptor (TC 1.A.9.1) subfamily. Expressed in the body wall muscle.

The protein localises to the postsynaptic cell membrane. Its subcellular location is the cell membrane. In terms of biological role, after binding acetylcholine, the AChR responds by an extensive change in conformation that affects all subunits and leads to opening of an ion-conducting channel across the plasma membrane. A subunit of the levamisole-insensitive nicotinic receptor. The protein is Acetylcholine receptor subunit alpha-type acr-16 (acr-16) of Caenorhabditis elegans.